We begin with the raw amino-acid sequence, 254 residues long: MNRRRRIYEGKAKILYEGPEPGTLVQFFKDDATAFNAKKHEVIDGKGVLNNRISEHIFTQLNRIGIPTHFIRRLNMREQLIKEVEIIPLEVVVRNVAAGSLAKHLGLEEGTILPRSIIEFYYKADALDDPMVTEEHITAFGWASPQEIDDIMALAIRVNDFLTGLFLGIGIQLVDFKMECGRLWEGDMMRIVVADEISPDSARLWDITTNDKLDKDRFRRDMGGLVEAYQEVARRLGIMNENDTPRPSGPTLVK.

Belongs to the SAICAR synthetase family.

The catalysed reaction is 5-amino-1-(5-phospho-D-ribosyl)imidazole-4-carboxylate + L-aspartate + ATP = (2S)-2-[5-amino-1-(5-phospho-beta-D-ribosyl)imidazole-4-carboxamido]succinate + ADP + phosphate + 2 H(+). It functions in the pathway purine metabolism; IMP biosynthesis via de novo pathway; 5-amino-1-(5-phospho-D-ribosyl)imidazole-4-carboxamide from 5-amino-1-(5-phospho-D-ribosyl)imidazole-4-carboxylate: step 1/2. This chain is Phosphoribosylaminoimidazole-succinocarboxamide synthase, found in Brucella melitensis biotype 2 (strain ATCC 23457).